The primary structure comprises 782 residues: Cyclic nucleotide-gated channel beta-3 (782 aa).

2 disordered regions span residues 1-111 and 147-168; these read MFKS…PKSK and GDIS…PSTQ. The Cytoplasmic segment spans residues 1–213; the sequence is MFKSLTIKSN…SIDSYTDRLY (213 aa). Basic and acidic residues-rich tracts occupy residues 13–25 and 57–73; these read KPRE…KQDP and EESH…KNSL. 2 stretches are compositionally biased toward polar residues: residues 74–83 and 152–168; these read RDLTTNPNHQ and PEAS…PSTQ. A helical membrane pass occupies residues 214–237; sequence LLWLLLVTIAYNWNCWLIPLRLVF. Over 238–244 the chain is Extracellular; that stretch reads PYQTPDN. A helical transmembrane segment spans residues 245-265; sequence THYWFITDITCDIIYLCDMLL. Topologically, residues 266 to 294 are cytoplasmic; sequence IQPRLQFIKGGDIMVDSNELKRHYRSSTK. A helical transmembrane segment spans residues 295 to 312; it reads FQLDVASVMPFDVFYLFF. The Extracellular portion of the chain corresponds to 313 to 315; it reads GFN. The chain crosses the membrane as a helical span at residues 316–330; the sequence is PVFRMNRILKYTSFF. Over 331–343 the chain is Cytoplasmic; it reads EFNHHLESIMDKA. Residues 343-442 are ion conduction pathway; sequence AYIYRVIRTT…IGQMQDVIGA (100 aa). The helical transmembrane segment at 344 to 366 threads the bilayer; sequence YIYRVIRTTGYLLYTLHINACIY. Residues 367–388 lie on the Extracellular side of the membrane; the sequence is YWASDYEGIGSTKWVYNGEGNK. 2 helical membrane-spanning segments follow: residues 389-415 and 416-440; these read YLRC…SFEI and VFQL…QDVI. Residues 402 to 405 form a selectivity filter region; sequence TIGG. The Cytoplasmic portion of the chain corresponds to 441–782; sequence GAATANQNNF…TIEVKEKAKQ (342 aa). The tract at residues 445–521 is C-linker; it reads ANQNNFRISM…SIISKVELFK (77 aa). Residues 525 to 641 form a cyclic nucleotide-binding domain region; sequence TQMIYDMLLR…LLMKKASVLL (117 aa). 3',5'-cyclic GMP contacts are provided by G586, E587, R599, and T600. Residues 692–724 are disordered; it reads EQTIQKTSENSEEGGGKRREYEDKEREPSEKIL. Basic and acidic residues predominate over residues 705-724; that stretch reads GGGKRREYEDKEREPSEKIL.

Belongs to the cyclic nucleotide-gated cation channel (TC 1.A.1.5) family. CNGB3 subfamily. In terms of assembly, forms heterotetrameric channels composed of CNGA3 and CNGB3 subunits with 3:1 stoichiometry.

The protein resides in the cell membrane. The enzyme catalyses Ca(2+)(in) = Ca(2+)(out). It carries out the reaction Na(+)(in) = Na(+)(out). It catalyses the reaction K(+)(in) = K(+)(out). The catalysed reaction is NH4(+)(in) = NH4(+)(out). The enzyme catalyses Rb(+)(in) = Rb(+)(out). It carries out the reaction Li(+)(in) = Li(+)(out). It catalyses the reaction Cs(+)(in) = Cs(+)(out). Pore-forming subunit of the cone cyclic nucleotide-gated channel. Mediates cone photoresponses at bright light converting transient changes in intracellular cGMP levels into electrical signals. In the dark, cGMP levels are high and keep the channel open enabling a steady inward current carried by Na(+) and Ca(2+) ions that leads to membrane depolarization and neurotransmitter release from synaptic terminals. Upon photon absorption cGMP levels decline leading to channel closure and membrane hyperpolarization that ultimately slows neurotransmitter release and signals the presence of light, the end point of the phototransduction cascade. Conducts cGMP- and cAMP-gated ion currents, with permeability for monovalent and divalent cations. The protein is Cyclic nucleotide-gated channel beta-3 of Canis lupus familiaris (Dog).